Reading from the N-terminus, the 376-residue chain is Lipid-A-disaccharide synthase (376 aa).

Belongs to the LpxB family.

The enzyme catalyses a lipid X + a UDP-2-N,3-O-bis[(3R)-3-hydroxyacyl]-alpha-D-glucosamine = a lipid A disaccharide + UDP + H(+). It participates in bacterial outer membrane biogenesis; LPS lipid A biosynthesis. Condensation of UDP-2,3-diacylglucosamine and 2,3-diacylglucosamine-1-phosphate to form lipid A disaccharide, a precursor of lipid A, a phosphorylated glycolipid that anchors the lipopolysaccharide to the outer membrane of the cell. The sequence is that of Lipid-A-disaccharide synthase from Coxiella burnetii (strain Dugway 5J108-111).